The primary structure comprises 346 residues: Serine/threonine-protein phosphatase PP1(4.8) (346 aa).

The tract at residues 46 to 65 is disordered; sequence QSAQTQESTPKTNGTGRATT. Positions 102, 104, 130, and 162 each coordinate Mn(2+). Residue His163 is the Proton donor of the active site. Residues His211 and His287 each coordinate Mn(2+).

Belongs to the PPP phosphatase family. PP-1 subfamily. Mn(2+) is required as a cofactor.

It catalyses the reaction O-phospho-L-seryl-[protein] + H2O = L-seryl-[protein] + phosphate. The catalysed reaction is O-phospho-L-threonyl-[protein] + H2O = L-threonyl-[protein] + phosphate. This is Serine/threonine-protein phosphatase PP1(4.8) from Trypanosoma brucei brucei.